Here is a 522-residue protein sequence, read N- to C-terminus: Putative thymidine phosphorylase (522 aa).

Belongs to the thymidine/pyrimidine-nucleoside phosphorylase family. Type 2 subfamily.

The enzyme catalyses thymidine + phosphate = 2-deoxy-alpha-D-ribose 1-phosphate + thymine. This Albidiferax ferrireducens (strain ATCC BAA-621 / DSM 15236 / T118) (Rhodoferax ferrireducens) protein is Putative thymidine phosphorylase.